The chain runs to 181 residues: NADH-quinone oxidoreductase subunit B (181 aa).

Positions 60, 61, 125, and 155 each coordinate [4Fe-4S] cluster.

It belongs to the complex I 20 kDa subunit family. In terms of assembly, NDH-1 is composed of 14 different subunits. Subunits NuoB, C, D, E, F, and G constitute the peripheral sector of the complex. It depends on [4Fe-4S] cluster as a cofactor.

The protein localises to the cell inner membrane. It carries out the reaction a quinone + NADH + 5 H(+)(in) = a quinol + NAD(+) + 4 H(+)(out). In terms of biological role, NDH-1 shuttles electrons from NADH, via FMN and iron-sulfur (Fe-S) centers, to quinones in the respiratory chain. Couples the redox reaction to proton translocation (for every two electrons transferred, four hydrogen ions are translocated across the cytoplasmic membrane), and thus conserves the redox energy in a proton gradient. This chain is NADH-quinone oxidoreductase subunit B, found in Novosphingobium aromaticivorans (strain ATCC 700278 / DSM 12444 / CCUG 56034 / CIP 105152 / NBRC 16084 / F199).